Consider the following 268-residue polypeptide: Tryptophan synthase alpha chain (268 aa).

Active-site proton acceptor residues include glutamate 49 and aspartate 60.

Belongs to the TrpA family. As to quaternary structure, tetramer of two alpha and two beta chains.

It carries out the reaction (1S,2R)-1-C-(indol-3-yl)glycerol 3-phosphate + L-serine = D-glyceraldehyde 3-phosphate + L-tryptophan + H2O. Its pathway is amino-acid biosynthesis; L-tryptophan biosynthesis; L-tryptophan from chorismate: step 5/5. In terms of biological role, the alpha subunit is responsible for the aldol cleavage of indoleglycerol phosphate to indole and glyceraldehyde 3-phosphate. The chain is Tryptophan synthase alpha chain from Citrobacter koseri (strain ATCC BAA-895 / CDC 4225-83 / SGSC4696).